The sequence spans 513 residues: ATP synthase subunit alpha (513 aa).

Position 169–176 (169–176 (GDRQTGKT)) interacts with ATP.

Belongs to the ATPase alpha/beta chains family. F-type ATPases have 2 components, CF(1) - the catalytic core - and CF(0) - the membrane proton channel. CF(1) has five subunits: alpha(3), beta(3), gamma(1), delta(1), epsilon(1). CF(0) has three main subunits: a(1), b(2) and c(9-12). The alpha and beta chains form an alternating ring which encloses part of the gamma chain. CF(1) is attached to CF(0) by a central stalk formed by the gamma and epsilon chains, while a peripheral stalk is formed by the delta and b chains.

Its subcellular location is the cell inner membrane. It catalyses the reaction ATP + H2O + 4 H(+)(in) = ADP + phosphate + 5 H(+)(out). Produces ATP from ADP in the presence of a proton gradient across the membrane. The alpha chain is a regulatory subunit. The protein is ATP synthase subunit alpha of Pectobacterium carotovorum subsp. carotovorum (strain PC1).